The primary structure comprises 549 residues: Urocanate hydratase (549 aa).

NAD(+)-binding positions include Gly46–Gly47, Gln124, Gly170–Gly172, Glu190, Arg195, Asn236–Ala237, Gln257–His261, Tyr267–Val268, and Tyr316. Cys404 is a catalytic residue. An NAD(+)-binding site is contributed by Gly486.

It belongs to the urocanase family. The cofactor is NAD(+).

It localises to the cytoplasm. The enzyme catalyses 4-imidazolone-5-propanoate = trans-urocanate + H2O. The protein operates within amino-acid degradation; L-histidine degradation into L-glutamate; N-formimidoyl-L-glutamate from L-histidine: step 2/3. In terms of biological role, catalyzes the conversion of urocanate to 4-imidazolone-5-propionate. The chain is Urocanate hydratase from Caldanaerobacter subterraneus subsp. tengcongensis (strain DSM 15242 / JCM 11007 / NBRC 100824 / MB4) (Thermoanaerobacter tengcongensis).